Here is a 212-residue protein sequence, read N- to C-terminus: ER lumen protein-retaining receptor 2 (212 aa).

The Lumenal segment spans residues 1–4 (MNIF). The chain crosses the membrane as a helical span at residues 5–24 (RLTGDLSHLAAIVILLLKIW). At 25 to 32 (KTRSCAGI) the chain is on the cytoplasmic side. A helical transmembrane segment spans residues 33–52 (SGKSQLLFALVFTTRYLDLF). The tract at residues 47-48 (RY) is interaction with the K-D-E-L motif on target proteins. The Lumenal portion of the chain corresponds to 53–58 (TSFISL). Residues 59–79 (YNTSMKVIYLACSYATVYLIY) form a helical membrane-spanning segment. The Cytoplasmic portion of the chain corresponds to 80–92 (LKFKATYDGNHDT). The chain crosses the membrane as a helical span at residues 93 to 110 (FRVEFLVVPVGGLSFLVN). At 111 to 116 (HDFSPL) the chain is on the lumenal side. Residues 117–135 (EILWTFSIYLESVAILPQL) traverse the membrane as a helical segment. At 136 to 149 (FMISKTGEAETITT) the chain is on the cytoplasmic side. Residues 150 to 168 (HYLFFLGLYRALYLVNWIW) traverse the membrane as a helical segment. The tract at residues 159–169 (RALYLVNWIWR) is interaction with the K-D-E-L motif on target proteins. Topologically, residues 169-178 (RFYFEGFFDL) are lumenal. Residues 179–199 (IAVVAGVVQTILYCDFFYLYI) traverse the membrane as a helical segment. Over 200–212 (TKVLKGKKLSLPA) the chain is Cytoplasmic. Residues 204–207 (KGKK) are important for recycling of cargo proteins with the sequence motif K-D-E-L from the Golgi to the endoplasmic reticulum.

The protein belongs to the ERD2 family.

It is found in the endoplasmic reticulum membrane. The protein resides in the golgi apparatus membrane. It localises to the cytoplasmic vesicle. The protein localises to the COPI-coated vesicle membrane. Its function is as follows. Membrane receptor that binds the K-D-E-L sequence motif in the C-terminal part of endoplasmic reticulum resident proteins and maintains their localization in that compartment by participating to their vesicle-mediated recycling back from the Golgi. Binding is pH dependent, and is optimal at pH 5-5.4. The chain is ER lumen protein-retaining receptor 2 (KDELR2) from Homo sapiens (Human).